We begin with the raw amino-acid sequence, 372 residues long: Partitioning defective 6 homolog beta (372 aa).

At serine 11 the chain carries Phosphoserine. Residues 16–96 form the PB1 domain; sequence TMEVKSKFGA…PLLRIFIQKK (81 aa). The interaction with PARD3 and CDC42 stretch occupies residues 126-253; sequence RKKPHIVISM…ITVRPANQRN (128 aa). Residues 133–150 form the Pseudo-CRIB domain; it reads ISMPQDFRPVSSIIDVDI. The 94-residue stretch at 157–250 folds into the PDZ domain; that stretch reads RVRLYKYGTE…NLIITVRPAN (94 aa). Positions 253–272 are enriched in polar residues; it reads NNVVRNSRTSGSSGQSTDNS. The tract at residues 253-292 is disordered; that stretch reads NNVVRNSRTSGSSGQSTDNSLLGYPQQIEPSFEPEDEDSE.

It belongs to the PAR6 family. As to quaternary structure, interacts with PARD3. Interacts with GTP-bound forms of CDC42 and RAC1. Interacts with GTP-bound RHOQ/TC10. Interacts with PALS1. Interacts with the N-terminal part of PRKCI and PRKCZ. Part of a complex with PARD3, CDC42 or RAC1 and PRKCI or PRKCZ. Part of a complex with LLGL1 and PRKCI. Interacts with PARD3B. Interacts with ECT2. Expressed in pancreas and in both adult and fetal kidney. Weakly expressed in placenta and lung. Not expressed in other tissues.

The protein localises to the cytoplasm. It is found in the cell membrane. The protein resides in the cell junction. Its subcellular location is the tight junction. Adapter protein involved in asymmetrical cell division and cell polarization processes. Probably involved in formation of epithelial tight junctions. Association with PARD3 may prevent the interaction of PARD3 with F11R/JAM1, thereby preventing tight junction assembly. The PARD6-PARD3 complex links GTP-bound Rho small GTPases to atypical protein kinase C proteins. The sequence is that of Partitioning defective 6 homolog beta (PARD6B) from Homo sapiens (Human).